We begin with the raw amino-acid sequence, 431 residues long: C4-dicarboxylate transport protein (431 aa).

Transmembrane regions (helical) follow at residues 8–28, 44–64, 78–98, 148–168, 188–208, 222–242, 307–327, and 355–375; these read ILYV…HFWP, LIKM…IAGM, LLYF…AAHL, GDIL…AAIG, IVHV…AFTI, LIGT…GAIA, IYMT…LTLL, and AATL…ILGI.

It belongs to the dicarboxylate/amino acid:cation symporter (DAACS) (TC 2.A.23) family.

It localises to the cell inner membrane. Its function is as follows. Responsible for the transport of dicarboxylates such as succinate, fumarate, and malate from the periplasm across the membrane. The chain is C4-dicarboxylate transport protein from Cupriavidus pinatubonensis (strain JMP 134 / LMG 1197) (Cupriavidus necator (strain JMP 134)).